Reading from the N-terminus, the 257-residue chain is Flap endonuclease Xni (257 aa).

Asp-112 serves as a coordination point for Mg(2+). Positions 169-256 (EQKKLVEFWA…LGFSLKQLRL (88 aa)) constitute a 5'-3' exonuclease domain. K(+) contacts are provided by Phe-179, Ala-180, Pro-188, Val-190, and Ile-193. The interaction with DNA stretch occupies residues 192 to 197 (GIGTKS).

Belongs to the Xni family. Mg(2+) is required as a cofactor. Requires K(+) as cofactor.

Has flap endonuclease activity. During DNA replication, flap endonucleases cleave the 5'-overhanging flap structure that is generated by displacement synthesis when DNA polymerase encounters the 5'-end of a downstream Okazaki fragment. The sequence is that of Flap endonuclease Xni from Pseudoalteromonas translucida (strain TAC 125).